Reading from the N-terminus, the 632-residue chain is Mitoguardin 1 (632 aa).

A helical membrane pass occupies residues 70–90 (PVAKKLFVVTAVSAISVIFLA). A phosphoserine mark is found at S289 and S293.

Belongs to the mitoguardin family. In terms of assembly, homodimer and heterodimer; forms heterodimers with MIGA2. Interacts with PLD6/MitoPLD.

It localises to the mitochondrion outer membrane. In terms of biological role, regulator of mitochondrial fusion: acts by forming homo- and heterodimers at the mitochondrial outer membrane and facilitating the formation of PLD6/MitoPLD dimers. May act by regulating phospholipid metabolism via PLD6/MitoPLD. The sequence is that of Mitoguardin 1 from Homo sapiens (Human).